The primary structure comprises 502 residues: L-amino-acid oxidase BmooLAAO-I (502 aa).

A signal peptide spans 1–18 (MNVFFTFSLLFLAALGSC). Cysteines 28 and 191 form a disulfide. Residues 61–62 (MS), 81–82 (EA), R89, and 105–108 (GPMR) each bind FAD. R108 is a substrate binding site. N-linked (GlcNAc...) asparagine glycosylation is present at N190. H241 contributes to the substrate binding site. V279 provides a ligand contact to FAD. C349 and C430 form a disulfide bridge. Y390 serves as a coordination point for substrate. Residues E475 and 482–487 (GWIDST) contribute to the FAD site. Residue 482 to 483 (GW) coordinates substrate.

Belongs to the flavin monoamine oxidase family. FIG1 subfamily. Homodimer; non-covalently linked. It depends on FAD as a cofactor. Post-translationally, N-glycosylated. The enzymatic activity is not affected by deglycosylation. In terms of tissue distribution, expressed by the venom gland.

It localises to the secreted. It catalyses the reaction an L-alpha-amino acid + O2 + H2O = a 2-oxocarboxylate + H2O2 + NH4(+). The catalysed reaction is L-leucine + O2 + H2O = 4-methyl-2-oxopentanoate + H2O2 + NH4(+). It carries out the reaction L-phenylalanine + O2 + H2O = 3-phenylpyruvate + H2O2 + NH4(+). The enzyme catalyses L-tryptophan + O2 + H2O = indole-3-pyruvate + H2O2 + NH4(+). It catalyses the reaction L-methionine + O2 + H2O = 4-methylsulfanyl-2-oxobutanoate + H2O2 + NH4(+). The catalysed reaction is L-isoleucine + O2 + H2O = (S)-3-methyl-2-oxopentanoate + H2O2 + NH4(+). It carries out the reaction L-histidine + O2 + H2O = 3-(imidazol-5-yl)pyruvate + H2O2 + NH4(+). The enzyme catalyses L-tyrosine + O2 + H2O = 3-(4-hydroxyphenyl)pyruvate + H2O2 + NH4(+). It catalyses the reaction L-alanine + O2 + H2O = pyruvate + H2O2 + NH4(+). The catalysed reaction is L-valine + O2 + H2O = 3-methyl-2-oxobutanoate + H2O2 + NH4(+). Its activity is regulated as follows. Its enzymatic activities is reduced when it is exposed to Ca(2+), Zn(2+), Al(3+), Cu(2+) or Ni(2+) salts. In terms of biological role, catalyzes an oxidative deamination of predominantly hydrophobic and aromatic L-amino acids, thus producing hydrogen peroxide that may contribute to the toxicity of the venom. Shows very high activity on L-Met, and L-Leu, high activity on L-Ile, L-Phe and L-Tyr and moderate activity on L-His, L-Val and L-Ala. Exhibits diverse biological activities, such as edema, apoptosis of tumor cell lines, antibacterial activities against both Gram-positive and Gram-negative bacteria, as well as induction of platelet aggregation. Effects of snake L-amino oxidases on platelets are controversial, since they either induce aggregation or inhibit agonist-induced aggregation. These different effects are probably due to different experimental conditions. Unlike other snake venom L-amino acid oxidases, does not induce hemorrhage. It may also induce hemolysis. Has parasiticidal activities against and leishmania, as a result of enzyme-catalyzed hydrogen peroxide production. The sequence is that of L-amino-acid oxidase BmooLAAO-I from Bothrops moojeni (Lance-headed viper).